Consider the following 252-residue polypeptide: Phosphate import ATP-binding protein PstB (252 aa).

Residues 5–247 (LIASDVNIFY…PRDERTEAYV (243 aa)) enclose the ABC transporter domain. 37–44 (GPSGCGKT) is an ATP binding site.

It belongs to the ABC transporter superfamily. Phosphate importer (TC 3.A.1.7) family. As to quaternary structure, the complex is composed of two ATP-binding proteins (PstB), two transmembrane proteins (PstC and PstA) and a solute-binding protein (PstS).

Its subcellular location is the cell membrane. The catalysed reaction is phosphate(out) + ATP + H2O = ADP + 2 phosphate(in) + H(+). In terms of biological role, part of the ABC transporter complex PstSACB involved in phosphate import. Responsible for energy coupling to the transport system. In Deinococcus geothermalis (strain DSM 11300 / CIP 105573 / AG-3a), this protein is Phosphate import ATP-binding protein PstB.